We begin with the raw amino-acid sequence, 176 residues long: ATP-dependent protease subunit HslV (176 aa).

The active site involves threonine 2. Na(+)-binding residues include serine 157, cysteine 160, and threonine 163.

This sequence belongs to the peptidase T1B family. HslV subfamily. A double ring-shaped homohexamer of HslV is capped on each side by a ring-shaped HslU homohexamer. The assembly of the HslU/HslV complex is dependent on binding of ATP.

Its subcellular location is the cytoplasm. The catalysed reaction is ATP-dependent cleavage of peptide bonds with broad specificity.. Allosterically activated by HslU binding. Its function is as follows. Protease subunit of a proteasome-like degradation complex believed to be a general protein degrading machinery. The chain is ATP-dependent protease subunit HslV from Buchnera aphidicola subsp. Baizongia pistaciae (strain Bp).